The primary structure comprises 476 residues: Efflux pump atB (476 aa).

Residues 1-38 are disordered; the sequence is MAPQLAGSSHSSSASDQAHRQSSDPALESGSDTHVGSI. Transmembrane regions (helical) follow at residues 69 to 89, 96 to 116, 127 to 147, 186 to 206, 264 to 284, 294 to 314, 347 to 367, 372 to 392, 403 to 425, and 440 to 460; these read LIVA…LAPL, KPVY…CAVA, FFNG…VGDL, WSFY…SLLV, LLLC…FGAF, FNLW…IIGI, LPPA…FAWT, VHWI…IMIF, YPLY…AAAF, and WAGF…YIFY.

This sequence belongs to the major facilitator superfamily.

The protein resides in the cell membrane. Efflux pump that might be required for efficient secretion of terreic acid. The chain is Efflux pump atB from Aspergillus terreus (strain NIH 2624 / FGSC A1156).